Here is a 466-residue protein sequence, read N- to C-terminus: MVRNLTKKSFALSALVAASLMASGVMASDKTEPRNEEYKDKFSKQYNSWHDTAESKEVVDMLEEVPSLVVLWAGYGFAKDYNAPRGHMYAVTDVRNTLRTGAPKAATDGPMPMACWSCKSPDVPRVIEEQGEDGYFTGKWYKGGAEIVNTIGCGDCHEKGKSKLRVSRPFAERAFETLDTPFAKASKKDKQSMVCAQCHVEYYFEKTKDKKGFVKFPWDQGVTVEAMETYYDNLEFKDWTHKVSKTPMLKAQHPGYETWKLGVHGQNNVSCTDCHMPKVKNDKGRKYTDHKVGNPFDRFEETCGTCHEQSKEFMVNLTKERKVKVADLKARAETQLVKAHFEAKAAWDAGATEAEMKPILTDIRHSQWRWDYATASHGVAAHAPDEALRVLGTSVDKAADARIKLAQLLAVKGVKQPIAYPDTSTKAKAQAALGMDMKKMNADKADFKKNTLPKWEAEAKKREATY.

An N-terminal signal peptide occupies residues 1–27 (MVRNLTKKSFALSALVAASLMASGVMA). His87 contacts heme c. 3 residues coordinate heme: Cys115, Cys118, and Lys119. Positions 153, 156, 157, 195, 198, and 199 each coordinate heme c. The Ca(2+) site is built by Glu201, Tyr202, Lys250, and Gln252. Tyr202 is a binding site for substrate. His253 provides a ligand contact to substrate. Residues His264, Cys271, Cys274, His275, His290, Cys303, Cys306, His307, and His382 each coordinate heme c.

This sequence belongs to the cytochrome c-552 family. Requires Ca(2+) as cofactor. It depends on heme c as a cofactor.

The protein localises to the periplasm. The catalysed reaction is 6 Fe(III)-[cytochrome c] + NH4(+) + 2 H2O = 6 Fe(II)-[cytochrome c] + nitrite + 8 H(+). The protein operates within nitrogen metabolism; nitrate reduction (assimilation). Catalyzes the reduction of nitrite to ammonia, consuming six electrons in the process. The polypeptide is Cytochrome c-552 (Shewanella sediminis (strain HAW-EB3)).